The following is a 498-amino-acid chain: ATP synthase subunit beta, chloroplastic (498 aa).

Position 172 to 179 (172 to 179 (GGAGVGKT)) interacts with ATP.

This sequence belongs to the ATPase alpha/beta chains family. F-type ATPases have 2 components, CF(1) - the catalytic core - and CF(0) - the membrane proton channel. CF(1) has five subunits: alpha(3), beta(3), gamma(1), delta(1), epsilon(1). CF(0) has four main subunits: a(1), b(1), b'(1) and c(9-12).

The protein localises to the plastid. Its subcellular location is the chloroplast thylakoid membrane. It carries out the reaction ATP + H2O + 4 H(+)(in) = ADP + phosphate + 5 H(+)(out). Functionally, produces ATP from ADP in the presence of a proton gradient across the membrane. The catalytic sites are hosted primarily by the beta subunits. The protein is ATP synthase subunit beta, chloroplastic of Nymphaea odorata (White water lily).